The following is a 98-amino-acid chain: UPF0473 protein lp_2273 (98 aa).

Belongs to the UPF0473 family.

This Lactiplantibacillus plantarum (strain ATCC BAA-793 / NCIMB 8826 / WCFS1) (Lactobacillus plantarum) protein is UPF0473 protein lp_2273.